A 319-amino-acid polypeptide reads, in one-letter code: MALTRVAAIDCGTNSIRLLIADVGAGLARGELHDVHRETRIVRLGQGVDATGRFAPEAIARTRTALTDYAELLTFHHAERVRMVATSAARDVVNRDVFFAMTADVLGAALPGSAAEVITGAEEAELSFRGAVGELGSAGAPFVVVDLGGGSTEIVLGEHEVVASYSADIGCVRLTERCLHSDPPTLQEVSTARRLVRERLEPALRTVPLELARTWVGLAGTMTTLSALAQSMTAYDAAAIHLSRVPGADLLEVCQRLIGMTRKQRAALAPMHPGRADVIGGGAIVVEELARELRERAGIDQLTVSEHDILDGIALSLAG.

This sequence belongs to the GppA/Ppx family. In terms of assembly, homodimer.

It carries out the reaction [phosphate](n) + H2O = [phosphate](n-1) + phosphate + H(+). Its activity is regulated as follows. Exopolyphosphatase activity is inhibited by ppGpp alarmones produced during the bacterial stringent response. Functionally, degradation of inorganic polyphosphates (polyP). Releases orthophosphate processively from the ends of the polyP chain. Prefers long-chain length polyphosphates as substrates. In Mycobacterium tuberculosis (strain CDC 1551 / Oshkosh), this protein is Exopolyphosphatase 2.